A 385-amino-acid polypeptide reads, in one-letter code: Zinc finger protein B385R (385 aa).

C2H2-type zinc fingers lie at residues 166–190 and 168–190; these read LQCP…FYNH and CPNC…FYNH.

Belongs to the asfivirus B385R family.

The chain is Zinc finger protein B385R from African swine fever virus (isolate Tick/South Africa/Pretoriuskop Pr4/1996) (ASFV).